The following is a 162-amino-acid chain: MTSMKSFSIVIANDKPHVDTNNTTSALLRKVDDETLNELLALVVIIVKKFYNPDYTIINFSFNADDNIKNHYNVYVTVYTDKSVLYHNHFIVTDVSLNDTPLFVKIVYDSFIFPHIIHTTISKSLSVSAMLMPWSLSGNNDAVLRFYKRLRRAISNSFSIEH.

This is an uncharacterized protein from Acidianus sp. F28 (AFV-2).